The following is a 122-amino-acid chain: Small ribosomal subunit protein uS13 (122 aa).

A compositionally biased stretch (basic residues) spans 98–116 (VRGQKTKTNARTRKGRRKT). Residues 98-122 (VRGQKTKTNARTRKGRRKTVGAATK) are disordered.

It belongs to the universal ribosomal protein uS13 family. In terms of assembly, part of the 30S ribosomal subunit. Forms a loose heterodimer with protein S19. Forms two bridges to the 50S subunit in the 70S ribosome.

In terms of biological role, located at the top of the head of the 30S subunit, it contacts several helices of the 16S rRNA. In the 70S ribosome it contacts the 23S rRNA (bridge B1a) and protein L5 of the 50S subunit (bridge B1b), connecting the 2 subunits; these bridges are implicated in subunit movement. Contacts the tRNAs in the A and P-sites. This Campylobacter fetus subsp. fetus (strain 82-40) protein is Small ribosomal subunit protein uS13.